Here is a 325-residue protein sequence, read N- to C-terminus: Serpentine receptor class delta-59 (325 aa).

8 helical membrane passes run 14-34 (WYWP…LHLI), 45-65 (LKIF…FAFL), 75-95 (ISAA…TCFI), 97-117 (YHVF…TVLF), 132-152 (TYIM…IPFT), 190-210 (FLSA…GCLI), 235-255 (TLIH…IPSF), and 275-295 (ILVS…YFIV).

The protein belongs to the nematode receptor-like protein srd family.

It is found in the membrane. The sequence is that of Serpentine receptor class delta-59 (srd-59) from Caenorhabditis elegans.